The sequence spans 446 residues: Elongation factor Ts, mitochondrial (446 aa).

A mitochondrion-targeting transit peptide spans 1–33 (MSGSRSALSVVRLAACAKPCTLGSTSSVLTRPF).

This sequence belongs to the EF-Ts family.

The protein resides in the mitochondrion. Associates with the EF-Tu.GDP complex and induces the exchange of GDP to GTP. It remains bound to the aminoacyl-tRNA.EF-Tu.GTP complex up to the GTP hydrolysis stage on the ribosome. In Mycosarcoma maydis (Corn smut fungus), this protein is Elongation factor Ts, mitochondrial.